Consider the following 337-residue polypeptide: Tryptophan--tRNA ligase (337 aa).

Residues 11 to 13 (QPT) and 19 to 20 (GN) contribute to the ATP site. The short motif at 12–20 (PTGNLHLGN) is the 'HIGH' region element. Asp-135 contacts L-tryptophan. ATP-binding positions include 147-149 (GED), Val-190, and 199-203 (KMSKS). The 'KMSKS' region signature appears at 199–203 (KMSKS).

The protein belongs to the class-I aminoacyl-tRNA synthetase family. As to quaternary structure, homodimer.

It is found in the cytoplasm. It carries out the reaction tRNA(Trp) + L-tryptophan + ATP = L-tryptophyl-tRNA(Trp) + AMP + diphosphate + H(+). Functionally, catalyzes the attachment of tryptophan to tRNA(Trp). This chain is Tryptophan--tRNA ligase, found in Synechocystis sp. (strain ATCC 27184 / PCC 6803 / Kazusa).